The chain runs to 473 residues: 3-isopropylmalate dehydratase large subunit (473 aa).

The [4Fe-4S] cluster site is built by C349, C409, and C412.

The protein belongs to the aconitase/IPM isomerase family. LeuC type 1 subfamily. As to quaternary structure, heterodimer of LeuC and LeuD. [4Fe-4S] cluster serves as cofactor.

The catalysed reaction is (2R,3S)-3-isopropylmalate = (2S)-2-isopropylmalate. The protein operates within amino-acid biosynthesis; L-leucine biosynthesis; L-leucine from 3-methyl-2-oxobutanoate: step 2/4. Catalyzes the isomerization between 2-isopropylmalate and 3-isopropylmalate, via the formation of 2-isopropylmaleate. This is 3-isopropylmalate dehydratase large subunit from Gloeobacter violaceus (strain ATCC 29082 / PCC 7421).